We begin with the raw amino-acid sequence, 806 residues long: MHALRALDTLCENMEYNFRALEEKWAPIWERDRLFEVDENDSETPRKYVLDMFSYPSGDLHMGHAETYAYGDFIARYWRHRGYNVLHPVGWDSFGLPAENAAIKHGSDPKVWTYRNIDQQARSMRLYAASFDWSRRLHTSDPEYYRWNQWLFLKLYKHGLAYRKKAWVNWDPSDRTVLANEQVLPDGTSERSGALVVKKKLTQWFLRITAYADRLLDDLSMLENNWPERVITMQRNWIGRSEGVSIEFNIPTLKRPVTVFTTRPETIFGVTYLALAFDSEVTEELASKSGVLGELLELRHNIDKTHEGVRGLDLKSFAIHPLTGQSVPIFAASYILSDYAKGAVMSVPGHDTRDERFAVRYNLPIVKIMEDNRLISSGKYSGQSVTQARENITRDLCAKSLGRREISYRLRDWLISRQRYWGTPIPILYDSNGSEIPVEEDDLPVLLPDSEGIDLTPSGLSPLGGIHDWVNLHKAGSLFRRDTDTMDTFFDSSWYFLRYLNPDCDTAPFTLEKAKKWGPVDQYCGGVEHAVLHLLYARFITKFLYDIGFVDFKEPFLRLINQGMVVLNGAKMSKSKGNIVEFSKEVSQHGVDVIRFALIFSGPPEEDIDWKDVSMTGAARFLSRCIQTAKEVPKRTADLSLGDIELRKHTHSLLNDIDWLVDSYRFNVIAARLMDLLNITRKKIQTIGADNPAIREAIETIAIALDMFSPYTAEEMWEILGNKYSVSKALFPEVDTTFLEQKTTCAIVQIDGRLRGRLNVLTNITTEQLVHSARSLPAIEHALSGRSVKRVICVPPKLVNFVVEPK.

The 'HIGH' region motif lies at 54 to 64; sequence SYPSGDLHMGH. The 'KMSKS' region motif lies at 571 to 575; sequence KMSKS. Lys574 contacts ATP.

This sequence belongs to the class-I aminoacyl-tRNA synthetase family.

It is found in the cytoplasm. The catalysed reaction is tRNA(Leu) + L-leucine + ATP = L-leucyl-tRNA(Leu) + AMP + diphosphate. The polypeptide is Leucine--tRNA ligase (Tropheryma whipplei (strain Twist) (Whipple's bacillus)).